The primary structure comprises 143 residues: Large ribosomal subunit protein eL28y (143 aa).

It belongs to the eukaryotic ribosomal protein eL28 family.

The chain is Large ribosomal subunit protein eL28y (RPL28C) from Arabidopsis thaliana (Mouse-ear cress).